Here is a 343-residue protein sequence, read N- to C-terminus: Glycerol-3-phosphate dehydrogenase [NAD(P)+] (343 aa).

Residues W29, R49, and K122 each contribute to the NADPH site. Residues K122, G150, and S152 each contribute to the sn-glycerol 3-phosphate site. A154 is an NADPH binding site. Sn-glycerol 3-phosphate is bound by residues K205, D258, S268, R269, and N270. Catalysis depends on K205, which acts as the Proton acceptor. Residue R269 coordinates NADPH. The NADPH site is built by L288 and E290.

This sequence belongs to the NAD-dependent glycerol-3-phosphate dehydrogenase family.

The protein localises to the cytoplasm. It catalyses the reaction sn-glycerol 3-phosphate + NAD(+) = dihydroxyacetone phosphate + NADH + H(+). The enzyme catalyses sn-glycerol 3-phosphate + NADP(+) = dihydroxyacetone phosphate + NADPH + H(+). Its pathway is membrane lipid metabolism; glycerophospholipid metabolism. Catalyzes the reduction of the glycolytic intermediate dihydroxyacetone phosphate (DHAP) to sn-glycerol 3-phosphate (G3P), the key precursor for phospholipid synthesis. The sequence is that of Glycerol-3-phosphate dehydrogenase [NAD(P)+] from Mesorhizobium japonicum (strain LMG 29417 / CECT 9101 / MAFF 303099) (Mesorhizobium loti (strain MAFF 303099)).